The sequence spans 96 residues: UPF0213 protein Lreu_0682 (96 aa).

In terms of domain architecture, GIY-YIG spans 4-81 (EKYYIYVLYC…KHQTRRQKEK (78 aa)).

It belongs to the UPF0213 family.

The chain is UPF0213 protein Lreu_0682 from Limosilactobacillus reuteri (strain DSM 20016) (Lactobacillus reuteri).